A 126-amino-acid chain; its full sequence is Large ribosomal subunit protein bL20 (126 aa).

Residues 1 to 15 show a composition bias toward basic residues; it reads MARVKRAVNAQKKRR. The tract at residues 1-20 is disordered; that stretch reads MARVKRAVNAQKKRRTTLER.

The protein belongs to the bacterial ribosomal protein bL20 family.

Its function is as follows. Binds directly to 23S ribosomal RNA and is necessary for the in vitro assembly process of the 50S ribosomal subunit. It is not involved in the protein synthesizing functions of that subunit. The polypeptide is Large ribosomal subunit protein bL20 (Beutenbergia cavernae (strain ATCC BAA-8 / DSM 12333 / CCUG 43141 / JCM 11478 / NBRC 16432 / NCIMB 13614 / HKI 0122)).